The chain runs to 494 residues: Protein nucleotidyltransferase YdiU (494 aa).

ATP contacts are provided by G90, G92, R93, K113, D125, G126, R176, and R183. D252 functions as the Proton acceptor in the catalytic mechanism. Mg(2+)-binding residues include N253 and D262. D262 is an ATP binding site.

The protein belongs to the SELO family. Mg(2+) serves as cofactor. It depends on Mn(2+) as a cofactor.

It catalyses the reaction L-seryl-[protein] + ATP = 3-O-(5'-adenylyl)-L-seryl-[protein] + diphosphate. The enzyme catalyses L-threonyl-[protein] + ATP = 3-O-(5'-adenylyl)-L-threonyl-[protein] + diphosphate. The catalysed reaction is L-tyrosyl-[protein] + ATP = O-(5'-adenylyl)-L-tyrosyl-[protein] + diphosphate. It carries out the reaction L-histidyl-[protein] + UTP = N(tele)-(5'-uridylyl)-L-histidyl-[protein] + diphosphate. It catalyses the reaction L-seryl-[protein] + UTP = O-(5'-uridylyl)-L-seryl-[protein] + diphosphate. The enzyme catalyses L-tyrosyl-[protein] + UTP = O-(5'-uridylyl)-L-tyrosyl-[protein] + diphosphate. Nucleotidyltransferase involved in the post-translational modification of proteins. It can catalyze the addition of adenosine monophosphate (AMP) or uridine monophosphate (UMP) to a protein, resulting in modifications known as AMPylation and UMPylation. This chain is Protein nucleotidyltransferase YdiU, found in Alkalilimnicola ehrlichii (strain ATCC BAA-1101 / DSM 17681 / MLHE-1).